The primary structure comprises 305 residues: MILFEWGTYNALSTLKQAALLGTRITEIPPAVLSRRLPSGYYESYKKLGGEYFTSILAHGPYYSLSSEKGLKGHLSAIEKATLCGAEIYNYHLGKRVGDDLNYHLEVLKKFSEVNNEMIYSPEPATNIGEFGTLDELEELIKAAKEEDIKIIPSLQLENIFLNELGVYEKDDLDEAAEKADVDWWLKIFRRMDKISDYIMHFRFSQVIGLKYGKRFYKKRVPLGKGYPPVEPLTEALATYLVDNATRGGFKKVLFVYTGLPEVKYRDLIDLYAMIMKKSIDKLMSRESQVEYGDFYKVMSSEEEE.

This is an uncharacterized protein from Methanocaldococcus jannaschii (strain ATCC 43067 / DSM 2661 / JAL-1 / JCM 10045 / NBRC 100440) (Methanococcus jannaschii).